A 696-amino-acid polypeptide reads, in one-letter code: Golgi integral membrane protein 4 (696 aa).

Glycine 2 is lipidated: N-myristoyl glycine. Topologically, residues 2–12 are cytoplasmic; that stretch reads GNGMCSRKQKR. The chain crosses the membrane as a helical; Signal-anchor for type II membrane protein span at residues 13–33; the sequence is IFQTLLLLTVVFGFLYGAMLY. Residues 34-696 lie on the Lumenal side of the membrane; it reads YELQTQLRKA…AEKSHRRAEM (663 aa). Residues 35–244 are a coiled coil; that stretch reads ELQTQLRKAE…KQLKDTLNRI (210 aa). The golgi targeting stretch occupies residues 38-107; that stretch reads TQLRKAEAVA…ETLNKGRQDS (70 aa). The interval 80-175 is endosome targeting; the sequence is LEHKKAKEDF…QELSKLKETV (96 aa). Disordered stretches follow at residues 122-145, 244-391, and 427-696; these read KSQH…QGED, IPSL…HARA, and LREH…RAEM. The span at 123–145 shows a compositional bias: basic and acidic residues; it reads SQHEELKKQHSDLEEEHRKQGED. Residues 176 to 248 are golgi targeting; sequence YNLREENRQL…DTLNRIPSLR (73 aa). Residues 254–269 are compositionally biased toward polar residues; the sequence is EQQNVTQVAHSPQGYN. N-linked (GlcNAc...) asparagine glycosylation is present at asparagine 257. Basic and acidic residues-rich tracts occupy residues 271–281, 298–313, 324–343, 355–364, and 370–380; these read AREKPTREVQE, RAED…KEAE, EVER…RKAL, EHLEEEHDPS, and REWKEQHEQRE. Residue serine 364 is modified to Phosphoserine. Positions 436–453 are enriched in low complexity; that stretch reads QQRLQGHLLRQQEQQQQQ. 2 stretches are compositionally biased toward basic and acidic residues: residues 464-476 and 505-545; these read AELE…HQEQ and AYER…RAAV. Residue serine 538 is modified to Phosphoserine. Residues 604 to 626 show a composition bias toward acidic residues; the sequence is QQEDNVDEQYQEEAEEEVQEDLT. Tyrosine 613 is modified (phosphotyrosine). A Phosphothreonine modification is found at threonine 626. Basic and acidic residues-rich tracts occupy residues 627–638 and 661–672; these read EEKKRELEHNAE and RDDNRPKGREEH. Phosphotyrosine is present on tyrosine 673. The span at 673 to 683 shows a compositional bias: acidic residues; sequence YEEEEEEEEDG.

Belongs to the GOLIM4 family. In terms of processing, phosphorylated probably by c-AMP-dependent kinases in its lumenal part. O-glycosylated; modified by sialic acid residues. Post-translationally, N-glycosylated; N-glycans are probably of the complex type and modified by sialic acid residues.

It localises to the golgi apparatus. The protein localises to the golgi stack membrane. The protein resides in the endosome membrane. It is found in the membrane. Functionally, plays a role in endosome to Golgi protein trafficking; mediates protein transport along the late endosome-bypass pathway from the early endosome to the Golgi. This is Golgi integral membrane protein 4 (GOLIM4) from Homo sapiens (Human).